Reading from the N-terminus, the 78-residue chain is D-alanyl carrier protein (78 aa).

Residues 1-77 form the Carrier domain; sequence MAVKEEVVEI…KVIAKVESLI (77 aa). An O-(pantetheine 4'-phosphoryl)serine modification is found at Ser-35.

This sequence belongs to the DltC family. Post-translationally, 4'-phosphopantetheine is transferred from CoA to a specific serine of apo-DCP.

It localises to the cytoplasm. It functions in the pathway cell wall biogenesis; lipoteichoic acid biosynthesis. Its function is as follows. Carrier protein involved in the D-alanylation of lipoteichoic acid (LTA). The loading of thioester-linked D-alanine onto DltC is catalyzed by D-alanine--D-alanyl carrier protein ligase DltA. The DltC-carried D-alanyl group is further transferred to cell membrane phosphatidylglycerol (PG) by forming an ester bond, probably catalyzed by DltD. D-alanylation of LTA plays an important role in modulating the properties of the cell wall in Gram-positive bacteria, influencing the net charge of the cell wall. The polypeptide is D-alanyl carrier protein (Leuconostoc citreum (strain KM20)).